The chain runs to 63 residues: Overexpressed in colon carcinoma 1 protein homolog (63 aa).

Residues Met1–Ser10 are compositionally biased toward polar residues. Residues Met1 to Gly39 are disordered.

This sequence belongs to the OCC1 family.

This Mus musculus (Mouse) protein is Overexpressed in colon carcinoma 1 protein homolog.